A 153-amino-acid chain; its full sequence is Aspartate carbamoyltransferase regulatory chain (153 aa).

Zn(2+) is bound by residues cysteine 109, cysteine 114, cysteine 138, and cysteine 141.

The protein belongs to the PyrI family. As to quaternary structure, contains catalytic and regulatory chains. Zn(2+) serves as cofactor.

Its function is as follows. Involved in allosteric regulation of aspartate carbamoyltransferase. In Salmonella arizonae (strain ATCC BAA-731 / CDC346-86 / RSK2980), this protein is Aspartate carbamoyltransferase regulatory chain.